The primary structure comprises 382 residues: Chaperone protein DnaJ (382 aa).

A J domain is found at Asp-5–Gly-70. The segment at Gly-138 to Glu-216 adopts a CR-type zinc-finger fold. Residues Cys-151, Cys-154, Cys-168, Cys-171, Cys-190, Cys-193, Cys-204, and Cys-207 each coordinate Zn(2+). 4 CXXCXGXG motif repeats span residues Cys-151–Gly-158, Cys-168–Gly-175, Cys-190–Gly-197, and Cys-204–Gly-211.

The protein belongs to the DnaJ family. As to quaternary structure, homodimer. Zn(2+) is required as a cofactor.

It localises to the cytoplasm. Functionally, participates actively in the response to hyperosmotic and heat shock by preventing the aggregation of stress-denatured proteins and by disaggregating proteins, also in an autonomous, DnaK-independent fashion. Unfolded proteins bind initially to DnaJ; upon interaction with the DnaJ-bound protein, DnaK hydrolyzes its bound ATP, resulting in the formation of a stable complex. GrpE releases ADP from DnaK; ATP binding to DnaK triggers the release of the substrate protein, thus completing the reaction cycle. Several rounds of ATP-dependent interactions between DnaJ, DnaK and GrpE are required for fully efficient folding. Also involved, together with DnaK and GrpE, in the DNA replication of plasmids through activation of initiation proteins. In Ehrlichia ruminantium (strain Gardel), this protein is Chaperone protein DnaJ.